Here is a 244-residue protein sequence, read N- to C-terminus: Tetraspanin-1 (244 aa).

Helical transmembrane passes span 11 to 31, 67 to 87, 104 to 124, and 198 to 218; these read VLFF…AVGF, LIVV…TAVL, YLVL…AVLV, and ILLV…PILI.

This sequence belongs to the tetraspanin (TM4SF) family.

The protein localises to the membrane. This chain is Tetraspanin-1 (tsp-1), found in Caenorhabditis elegans.